A 272-amino-acid polypeptide reads, in one-letter code: Cytochrome b-c1 complex subunit Rieske-1, mitochondrial (272 aa).

The transit peptide at 1–60 directs the protein to the mitochondrion; sequence MLRVAGRRLFSVSQRSSTATSFVVSRDHTLSDGGGDSSSAPRSLPSADLSSYHRSLIRGF. Positions 27–46 are disordered; that stretch reads DHTLSDGGGDSSSAPRSLPS. At 61-109 the chain is on the mitochondrial matrix side; that stretch reads SSQVLAQGNEIGFGSEVPATVEAVKTPNSKIVYDDHNHERYPPGDPSKR. Residues 110–132 form a helical membrane-spanning segment; the sequence is AFAYFVLSGGRFVYASVLRLLVL. At 133-272 the chain is on the mitochondrial intermembrane side; it reads KLIVSMSASK…FLEENKLLIG (140 aa). The Rieske domain maps to 201–270; the sequence is VRVKNPEWLV…YSFLEENKLL (70 aa). Residues Cys-215, His-217, Cys-234, and His-237 each coordinate [2Fe-2S] cluster. An intrachain disulfide couples Cys-220 to Cys-236.

The protein belongs to the Rieske iron-sulfur protein family. As to quaternary structure, component of the ubiquinol-cytochrome c oxidoreductase (cytochrome b-c1 complex, complex III, CIII), a multisubunit enzyme composed of 10 subunits. The complex is composed of 3 respiratory subunits cytochrome b (MT-CYB), cytochrome c1 (CYC1-1 or CYC1-2) and Rieske protein (UCR1-1 or UCR1-2), 2 core protein subunits MPPalpha1 (or MPPalpha2) and MPPB, and 5 low-molecular weight protein subunits QCR7-1 (or QCR7-2), UCRQ-1 (or UCRQ-2), QCR9, UCRY and probably QCR6-1 (or QCR6-2). The complex exists as an obligatory dimer and forms supercomplexes (SCs) in the inner mitochondrial membrane with NADH-ubiquinone oxidoreductase (complex I, CI), resulting in different assemblies (supercomplexes SCI(1)III(2) and SCI(2)III(4)). It depends on [2Fe-2S] cluster as a cofactor.

Its subcellular location is the mitochondrion inner membrane. It carries out the reaction a quinol + 2 Fe(III)-[cytochrome c](out) = a quinone + 2 Fe(II)-[cytochrome c](out) + 2 H(+)(out). Functionally, component of the ubiquinol-cytochrome c oxidoreductase, a multisubunit transmembrane complex that is part of the mitochondrial electron transport chain which drives oxidative phosphorylation. The respiratory chain contains 3 multisubunit complexes succinate dehydrogenase (complex II, CII), ubiquinol-cytochrome c oxidoreductase (cytochrome b-c1 complex, complex III, CIII) and cytochrome c oxidase (complex IV, CIV), that cooperate to transfer electrons derived from NADH and succinate to molecular oxygen, creating an electrochemical gradient over the inner membrane that drives transmembrane transport and the ATP synthase. The cytochrome b-c1 complex catalyzes electron transfer from ubiquinol to cytochrome c, linking this redox reaction to translocation of protons across the mitochondrial inner membrane, with protons being carried across the membrane as hydrogens on the quinol. In the process called Q cycle, 2 protons are consumed from the matrix, 4 protons are released into the intermembrane space and 2 electrons are passed to cytochrome c. The Rieske protein is a catalytic core subunit containing a [2Fe-2S] iron-sulfur cluster. It cycles between 2 conformational states during catalysis to transfer electrons from the quinol bound in the Q(0) site in cytochrome b to cytochrome c1. This Arabidopsis thaliana (Mouse-ear cress) protein is Cytochrome b-c1 complex subunit Rieske-1, mitochondrial.